We begin with the raw amino-acid sequence, 232 residues long: Phosphatidylserine decarboxylase proenzyme (232 aa).

The active-site Schiff-base intermediate with substrate; via pyruvic acid is serine 190. Serine 190 carries the pyruvic acid (Ser); by autocatalysis modification.

Belongs to the phosphatidylserine decarboxylase family. PSD-A subfamily. As to quaternary structure, heterodimer of a large membrane-associated beta subunit and a small pyruvoyl-containing alpha subunit. Pyruvate is required as a cofactor. Post-translationally, is synthesized initially as an inactive proenzyme. Formation of the active enzyme involves a self-maturation process in which the active site pyruvoyl group is generated from an internal serine residue via an autocatalytic post-translational modification. Two non-identical subunits are generated from the proenzyme in this reaction, and the pyruvate is formed at the N-terminus of the alpha chain, which is derived from the carboxyl end of the proenzyme. The post-translation cleavage follows an unusual pathway, termed non-hydrolytic serinolysis, in which the side chain hydroxyl group of the serine supplies its oxygen atom to form the C-terminus of the beta chain, while the remainder of the serine residue undergoes an oxidative deamination to produce ammonia and the pyruvoyl prosthetic group on the alpha chain.

Its subcellular location is the cell membrane. It catalyses the reaction a 1,2-diacyl-sn-glycero-3-phospho-L-serine + H(+) = a 1,2-diacyl-sn-glycero-3-phosphoethanolamine + CO2. It functions in the pathway phospholipid metabolism; phosphatidylethanolamine biosynthesis; phosphatidylethanolamine from CDP-diacylglycerol: step 2/2. Its function is as follows. Catalyzes the formation of phosphatidylethanolamine (PtdEtn) from phosphatidylserine (PtdSer). This Allorhizobium ampelinum (strain ATCC BAA-846 / DSM 112012 / S4) (Agrobacterium vitis (strain S4)) protein is Phosphatidylserine decarboxylase proenzyme.